The sequence spans 254 residues: Emerin (254 aa).

Met-1 bears the N-acetylmethionine mark. Residues 1–45 (MDNYADLSDTELTTLLRRYNIPHGPVVGSTRRLYEKKIFEYETQR) enclose the LEM domain. 2 positions are modified to phosphoserine: Ser-8 and Ser-29. Residues 46-222 (RRLSPPSSSA…PGAGLGQDRQ (177 aa)) form an interaction with F-actin region. Residue Ser-49 is modified to Phosphoserine; by PKA. Residues Ser-54, Ser-60, Ser-87, Ser-98, Ser-141, Ser-142, and Ser-143 each carry the phosphoserine modification. Tyr-161 carries the post-translational modification Phosphotyrosine. An interaction with CTNNB1 region spans residues 168–186 (RPVSASRSSLDLSYYPTSS). Residues Ser-171, Ser-173, and Ser-175 each carry the phosphoserine modification. The chain crosses the membrane as a helical span at residues 223 to 243 (VPLWGQLLLFLVFVIVLFFIY).

Interacts with lamins A and C, BANF1, GMCL, BCLAF1 and YTHDC1/YT521. Interacts with TMEM43; the interaction retains emerin in the nuclear inner membrane. Interacts with SUN1 and SUN2. Interacts with ACTB, SPTAN1, F-actin, CTNNB1 and beta-tubulin. Interacts with TMEM201. Interacts with NEMP1. In terms of processing, found in four different phosphorylated forms, three of which appear to be associated with the cell cycle. Skeletal muscle, heart, colon, testis, ovary and pancreas.

It is found in the nucleus inner membrane. The protein localises to the nucleus outer membrane. Its function is as follows. Stabilizes and promotes the formation of a nuclear actin cortical network. Stimulates actin polymerization in vitro by binding and stabilizing the pointed end of growing filaments. Inhibits beta-catenin activity by preventing its accumulation in the nucleus. Acts by influencing the nuclear accumulation of beta-catenin through a CRM1-dependent export pathway. Links centrosomes to the nuclear envelope via a microtubule association. Required for proper localization of non-farnesylated prelamin-A/C. Together with NEMP1, contributes to nuclear envelope stiffness in germ cells. EMD and BAF are cooperative cofactors of HIV-1 infection. Association of EMD with the viral DNA requires the presence of BAF and viral integrase. The association of viral DNA with chromatin requires the presence of BAF and EMD. This chain is Emerin (EMD), found in Homo sapiens (Human).